The primary structure comprises 482 residues: UDP-N-acetylmuramate--L-alanine ligase (482 aa).

ATP is bound at residue 129-135 (GTHGKTT).

It belongs to the MurCDEF family.

Its subcellular location is the cytoplasm. The enzyme catalyses UDP-N-acetyl-alpha-D-muramate + L-alanine + ATP = UDP-N-acetyl-alpha-D-muramoyl-L-alanine + ADP + phosphate + H(+). Its pathway is cell wall biogenesis; peptidoglycan biosynthesis. In terms of biological role, cell wall formation. This is UDP-N-acetylmuramate--L-alanine ligase from Acinetobacter baumannii (strain SDF).